The following is a 530-amino-acid chain: BTB/POZ domain-containing protein 3 (530 aa).

A disordered region spans residues 23–48; it reads KNRSKKGSKKANSSGGGGGGGSVGSG. The span at 36-46 shows a compositional bias: gly residues; the sequence is SGGGGGGGSVG. The BTB domain occupies 128 to 198; it reads ADVHFVVGPP…IYCDEIDLAA (71 aa). The BACK domain occupies 243-308; that stretch reads FEEPDLTQRC…NWAEVECQRQ (66 aa).

In terms of tissue distribution, in the somatosensory cortex, specifically expressed in spiny stellate neurons during barrel formation. Also expressed in the olfactory bulb, piriform cortex and hippocampus.

It is found in the cytoplasm. Its subcellular location is the cytosol. The protein resides in the nucleus. Acts as a key regulator of dendritic field orientation during development of sensory cortex. Also directs dendrites toward active axon terminals when ectopically expressed. This chain is BTB/POZ domain-containing protein 3 (Btbd3), found in Mus musculus (Mouse).